A 680-amino-acid polypeptide reads, in one-letter code: WD repeat-containing protein 48 homolog (680 aa).

WD repeat units lie at residues 26 to 65 (QHRNGVNALQLDANNGKLYSAGRDAIIRVWNTRTDSSEKY), 71 to 110 (HHNDWVNDIVLCCNGRNLISASCDTTVKVWNAQKGFCMST), 113 to 152 (THRDYVQALAYAKDREQVASAGLDKAIFLWDVNTLTALTA), 164 to 203 (GSKDSIYSLAMNPSGTVIVSGSTENILRIWDPRTCMRIMK), 206 to 245 (GHTENVRCLVVSPDGNQVVSGSSDGTIKVWNLGQQRCVQT), 248 to 287 (VHKEGVWSLLMSENFQYIISGSRDRNIIVTEMRNPSNKTL), 290 to 329 (EEQAPVLSLGYNIDKTGVWATTWNSDIRCWKLPMYDRCTL), and 350 to 389 (KGGAAIKECAVLNDKRYIITKDSQDQVVVYDVLRVVKKEQ). Positions 592–616 (ETTPSGGNANNSLQNSQSDANSEGS) are disordered.

Belongs to the WD repeat WDR48 family. As to quaternary structure, catalytic component of the Usp12-46 deubiquitylase complex consisting of Usp12-46, Wdr20 and Uaf1; regulatory subunit that, together wtih Wdr20, stabilizes Usp12-46. The Usp12-46 deubiquitylase complex associates with arr/arrow; the interaction leads to deubiquitination and stabilization of arr/arrow.

Functionally, regulatory component of the Usp12-46 deubiquitylase complex. activates deubiquitination by increasing the catalytic turnover without increasing the affinity of deubiquitinating enzymes for the substrate. The complex deubiquitylates the wg/wingless-signaling receptor arr/arrow, which stabilizes the receptor and increases its concentration at the cell surface; this enhances the sensitivity of cells to wg/wingless-signal stimulation. This increases the amplitude and spatial range of the signaling response to the wg/wingless morphogen gradient, facilitating the precise concentration-dependent regulation of its target genes. Together with Wdr20 and Usp12-46 required for wg/wingless-mediated signaling in the wing imaginal disc and for wg/wingless-dependent regulation of intestinal stem cell proliferation. The protein is WD repeat-containing protein 48 homolog of Drosophila sechellia (Fruit fly).